Reading from the N-terminus, the 182-residue chain is Ribulose bisphosphate carboxylase small subunit, chloroplastic 5 (182 aa).

The N-terminal 49 residues, 1–49, are a transit peptide targeting the chloroplast; the sequence is MASSLMSNAATTMAAATTTAQANMVAPFNGLKSISAFPVTRKNNDITSV.

It belongs to the RuBisCO small chain family. As to quaternary structure, heterohexadecamer of 8 large and 8 small subunits.

It localises to the plastid. It is found in the chloroplast. Functionally, ruBisCO catalyzes two reactions: the carboxylation of D-ribulose 1,5-bisphosphate, the primary event in carbon dioxide fixation, as well as the oxidative fragmentation of the pentose substrate. Both reactions occur simultaneously and in competition at the same active site. Although the small subunit is not catalytic it is essential for maximal activity. This Mesembryanthemum crystallinum (Common ice plant) protein is Ribulose bisphosphate carboxylase small subunit, chloroplastic 5.